Consider the following 614-residue polypeptide: MLQVLLVTICLAVFPYQGSSIILESGNVNDYEVVYPQKLTALLKGAIQQPEQKYEDAMQYEFKVNGKPVVLHLEKNKGLFSEDYSETHYSPDGREITTNPPVEDHCYYHGHIQNDAHLTASISACNGLKGHFQLRGETYLIEPLKIPDSEAHAVYKYENVEKEDEGPKKCGVTQTNWKSDEPIKASQFILTPEQRAYMNANKYIKLAIVVDNVMFRKYTGNFTAIRTRIYEIVNTLNLIYTILNIHIALVFLEIWSKGDSINVQSVVDVTLNSFGEWRERDLLNRKRHDNAQLLTGINFNGDTIGFGFVGSMCIPKKSVGIVQDHSKTHLLVATTMAHELGHNLGINHDGDSCTCQANSCIMAAKLSHQPSYQFSDCSINELWMYLISHTPRCILNEPLTTDVVSPAVCGNYVVEEGEECDCGSLWYCRNPCCDAATCKLKPGAECGDGVCCYQCRFVTAGTVCRPARSECDIPEYCSGQSVECPMDHIQKNGKPCLMNHGYCYNGRCPIMIHQCIALWGPGTTVSSDVCFQRNESGQGYSYCRRENNQNIPCAPQDVKCGRLYCKFHNVNTLPCNFKYSDFAPDYGLVDHGTKCGDGKVCNSNRQCVDVNTAY.

Positions 1-20 (MLQVLLVTICLAVFPYQGSS) are cleaved as a signal peptide. A propeptide spanning residues 21 to 192 (IILESGNVND…IKASQFILTP (172 aa)) is cleaved from the precursor. A Cys-switch; controls maturation motif is present at residues 167–173 (PKKCGVT). At Glu-193 the chain carries Pyrrolidone carboxylic acid (Glu). Residues 202 to 398 (KYIKLAIVVD…HTPRCILNEP (197 aa)) enclose the Peptidase M12B domain. An N-linked (GlcNAc...) asparagine glycan is attached at Asn-221. 3 disulfides stabilise this stretch: Cys-313-Cys-393, Cys-353-Cys-377, and Cys-355-Cys-360. His-338 contributes to the Zn(2+) binding site. A Metal-binding motif is present at residues 338–349 (HELGHNLGINHD). The Proton acceptor role is filled by Glu-339. Zn(2+) is bound by residues His-342 and His-348. The region spanning 406–492 (PAVCGNYVVE…ECPMDHIQKN (87 aa)) is the Disintegrin domain. Ca(2+) contacts are provided by Val-408, Asn-411, Glu-415, Glu-418, and Asp-421. Cystine bridges form between Cys-409/Cys-438, Cys-420/Cys-433, Cys-422/Cys-428, Cys-432/Cys-455, Cys-446/Cys-452, Cys-451/Cys-477, Cys-464/Cys-484, Cys-471/Cys-503, Cys-496/Cys-508, Cys-515/Cys-565, Cys-530/Cys-575, Cys-543/Cys-553, Cys-560/Cys-601, and Cys-595/Cys-607. The D/ECD-tripeptide motif lies at 470-472 (ECD). The Ca(2+) site is built by Asp-472, Glu-475, and Asp-487. A glycan (N-linked (GlcNAc...) asparagine) is linked at Asn-534.

The protein belongs to the venom metalloproteinase (M12B) family. P-III subfamily. P-IIIa sub-subfamily. As to quaternary structure, monomer. Requires Zn(2+) as cofactor. N-glycosylated. Post-translationally, the N-terminus is blocked. As to expression, expressed by the venom gland (at protein level). Expressed by the venom gland.

The protein resides in the secreted. The alpha-fibrinogenase activity is inhibited by EDTA, but not by pefabloc. In terms of biological role, zinc metalloprotease that has fibrinogenolytic activity. Does not have hemorrhagic activity in rats. Cleaves insulin B chain at '38-Ala-|-Leu-39' and '40-Tyr-|-Leu-41' bonds. Hydrolyzes only partially and weakly isolated extracellular matrix (ECM) bovine fibronectin and basal membrane (BM) protein human collagen IV in vitro. Murine laminin is not hydrolyzed, neither isolated nor in a solubilized BM preparation. Nidogen is hydrolyzed at '350-Ser-|-Phe-351' bond in a solubilized BM preparation. Hydrolyzes plasma proteins involved in blood coagulation in vitro. Has alpha-fibrinogenase activity cleaving human fibrinogen alpha chain at '432-Lys-|-Leu-433' bond, but does not cleave beta or gamma chains. Does not cleave fibrin. Hydrolyzes only partially bovine prothrombin at '200-Ser-|-Gly-201' bond, factor X (FX) heavy chain, and very slowly, FX light chain and plasminogen in vitro, without activating any of them. Has no effect in plasma thrombin generation. Does not inhibit platelet aggregation induced by collagen in vitro. May have a delayed pathological action as an anticoagulant in envenomed patients after they received serotherapy as it is not recognized by the venom antiserum. The sequence is that of Zinc metalloproteinase-disintegrin-like protein F1 from Vipera ammodytes ammodytes (Western sand viper).